The following is a 445-amino-acid chain: Phosphoglucosamine mutase (445 aa).

The Phosphoserine intermediate role is filled by Ser-102. Mg(2+)-binding residues include Ser-102, Asp-241, Asp-243, and Asp-245. Ser-102 carries the phosphoserine modification.

This sequence belongs to the phosphohexose mutase family. It depends on Mg(2+) as a cofactor. Activated by phosphorylation.

The enzyme catalyses alpha-D-glucosamine 1-phosphate = D-glucosamine 6-phosphate. Its function is as follows. Catalyzes the conversion of glucosamine-6-phosphate to glucosamine-1-phosphate. The sequence is that of Phosphoglucosamine mutase from Proteus mirabilis (strain HI4320).